A 78-amino-acid chain; its full sequence is Acyl carrier protein (78 aa).

A Carrier domain is found at serine 2–alanine 77. An O-(pantetheine 4'-phosphoryl)serine modification is found at serine 37.

This sequence belongs to the acyl carrier protein (ACP) family. Post-translationally, 4'-phosphopantetheine is transferred from CoA to a specific serine of apo-ACP by AcpS. This modification is essential for activity because fatty acids are bound in thioester linkage to the sulfhydryl of the prosthetic group.

The protein localises to the cytoplasm. It functions in the pathway lipid metabolism; fatty acid biosynthesis. Functionally, carrier of the growing fatty acid chain in fatty acid biosynthesis. This chain is Acyl carrier protein, found in Phocaeicola vulgatus (strain ATCC 8482 / DSM 1447 / JCM 5826 / CCUG 4940 / NBRC 14291 / NCTC 11154) (Bacteroides vulgatus).